The sequence spans 156 residues: MSWSKVKYFFFDTPEEKEAAQYSYEKEQTDMKKQQDPPEQQDVTFPKAQTKQNVVSIETAKQSSKVVLLEPRTYSEAQGIADHLKGRRAVVINLQRMSTDQAVRIVDFLSGTVYAIGGDIQKIGPKTFMCTPENVDIVGAISELFGEEEDTNIKRW.

Basic and acidic residues predominate over residues 23-36; that stretch reads SYEKEQTDMKKQQD. A disordered region spans residues 23-48; it reads SYEKEQTDMKKQQDPPEQQDVTFPKA. Polar residues predominate over residues 37-48; the sequence is PPEQQDVTFPKA.

This sequence belongs to the SepF family. In terms of assembly, homodimer. Interacts with FtsZ.

The protein resides in the cytoplasm. Its function is as follows. Cell division protein that is part of the divisome complex and is recruited early to the Z-ring. Probably stimulates Z-ring formation, perhaps through the cross-linking of FtsZ protofilaments. Its function overlaps with FtsA. The sequence is that of Cell division protein SepF from Bacillus cereus (strain ATCC 10987 / NRS 248).